Reading from the N-terminus, the 201-residue chain is Putative manganese efflux pump MntP 2 (201 aa).

6 helical membrane-spanning segments follow: residues 3–23 (LISVILISIGLSMDAFAVSIT), 39–59 (IGLFFGGFQALMPLIGWSIGI), 65–85 (IAALDHWIALILLSIIGGKMI), 116–136 (LILLAIATSIDALAVGVSFAF), 141–161 (IINTIVIIGSITFVICFIGVM), and 176–196 (ILGGVVLILIGVKIFIQHTNI).

The protein belongs to the MntP (TC 9.B.29) family.

The protein localises to the cell membrane. Its function is as follows. Probably functions as a manganese efflux pump. This Clostridium botulinum (strain Langeland / NCTC 10281 / Type F) protein is Putative manganese efflux pump MntP 2.